The primary structure comprises 360 residues: Putative F-box protein At1g65770 (360 aa).

The F-box domain maps to 2 to 50; it reads ADWSTLPVDLLNMIAGRLFSNIELKRFRSICRSWRSSVPGAGKKNPFRT.

The protein is Putative F-box protein At1g65770 of Arabidopsis thaliana (Mouse-ear cress).